We begin with the raw amino-acid sequence, 259 residues long: Protoheme IX farnesyltransferase (259 aa).

A run of 8 helical transmembrane segments spans residues 15-35 (LICL…NGVL), 61-81 (ATVA…TFLP), 83-103 (LTTA…TLWF), 109-129 (WGVV…ASAV), 137-157 (PLIL…ALAL), 182-202 (VCIF…WFTG), 208-228 (FAIE…LYLV), and 236-256 (AFQA…IDIC).

It belongs to the UbiA prenyltransferase family. Protoheme IX farnesyltransferase subfamily.

It is found in the cell inner membrane. The enzyme catalyses heme b + (2E,6E)-farnesyl diphosphate + H2O = Fe(II)-heme o + diphosphate. It participates in porphyrin-containing compound metabolism; heme O biosynthesis; heme O from protoheme: step 1/1. In terms of biological role, converts heme B (protoheme IX) to heme O by substitution of the vinyl group on carbon 2 of heme B porphyrin ring with a hydroxyethyl farnesyl side group. This Geotalea uraniireducens (strain Rf4) (Geobacter uraniireducens) protein is Protoheme IX farnesyltransferase.